Here is a 1764-residue protein sequence, read N- to C-terminus: Latent-transforming growth factor beta-binding protein 2 (1764 aa).

An N-terminal signal peptide occupies residues 1–35; that stretch reads MRAPTTVRCSGRIQRARWRGFLPLVLALLMGTSHA. Residues 80–140 are disordered; the sequence is PGLSPSEWNQ…PPAARTAHSV (61 aa). Residues 94-115 are heparin-binding; sequence IPGRLAEAEARRPSRAQQLRRV. The segment covering 108 to 128 has biased composition (polar residues); that stretch reads RAQQLRRVQSPVQTRRSNPRG. N-linked (GlcNAc...) asparagine glycosylation is present at asparagine 175. Residues 181–213 form the EGF-like 1 domain; the sequence is IKPVCQPPCQNRGSCSRPQLCICRSGFRGARCE. 3 disulfide bridges follow: cysteine 185-cysteine 195, cysteine 189-cysteine 201, and cysteine 203-cysteine 212. The tract at residues 220–279 is disordered; that stretch reads EFDPQNARPVPRRSVEGAPGPHRSSEARGSLVTRIQPLLPPLPPPPSRTLSQTRPLQQHA. Residues 226–243 are heparin-binding; the sequence is ARPVPRRSVEGAPGPHRS. Over residues 257 to 266 the composition is skewed to pro residues; that stretch reads LLPPLPPPPS. N-linked (GlcNAc...) asparagine glycosylation is present at asparagine 330. Residue 331–341 coordinates heparin; sequence LTEKIKKIKVV. Residues 383 to 415 enclose the EGF-like 2 domain; the sequence is RIYFCQIPCLNGGRCIGRDECWCPANSTGKFCH. 3 disulfides stabilise this stretch: cysteine 387–cysteine 397, cysteine 391–cysteine 403, and cysteine 405–cysteine 414. Residue asparagine 408 is glycosylated (N-linked (GlcNAc...) asparagine). A disordered region spans residues 484–529; that stretch reads EVDPVPEDNSVETRASHRPHGSSGHSHWASNSIPARAGEAPRPPPV. Serine 493 is subject to Phosphoserine. The TB 1 domain occupies 538–590; it reads GQCYLSTVNGQCANPLGELTSQEDCCGSVGTSWGVTSCAPCPPRPAFPVIENG. 3 disulfide bridges follow: cysteine 540/cysteine 562, cysteine 549/cysteine 575, and cysteine 563/cysteine 578. Asparagine 602 carries N-linked (GlcNAc...) asparagine glycosylation. One can recognise an EGF-like 3; calcium-binding domain in the interval 608–648; that stretch reads DINECLTLGLCKDSECVNTRGSYLCTCRPGLMLDPSRSRCV. Intrachain disulfides connect cysteine 612/cysteine 623, cysteine 618/cysteine 632, cysteine 634/cysteine 647, cysteine 660/cysteine 682, cysteine 669/cysteine 695, cysteine 683/cysteine 698, and cysteine 684/cysteine 710. One can recognise a TB 2 domain in the interval 658–710; sequence GLCYRSMVSGTCTLPLVQRITKQICCCSRVGKAWGSKCEHCPLPGTEAFREIC. Disordered stretches follow at residues 729–759 and 786–809; these read KAEE…RQPL and SAPH…LPGQ. An EGF-like 4 domain is found at 834–876; the sequence is GFDPCFAGASNICGPGTCVKLPNGYRCVCSPGYQLHPSQDYCT. 45 cysteine pairs are disulfide-bonded: cysteine 838–cysteine 851, cysteine 846–cysteine 860, cysteine 862–cysteine 875, cysteine 881–cysteine 892, cysteine 886–cysteine 901, cysteine 903–cysteine 918, cysteine 924–cysteine 935, cysteine 930–cysteine 944, cysteine 946–cysteine 958, cysteine 964–cysteine 975, cysteine 970–cysteine 984, cysteine 987–cysteine 998, cysteine 1004–cysteine 1015, cysteine 1010–cysteine 1024, cysteine 1026–cysteine 1039, cysteine 1045–cysteine 1056, cysteine 1051–cysteine 1065, cysteine 1068–cysteine 1081, cysteine 1087–cysteine 1098, cysteine 1093–cysteine 1107, cysteine 1110–cysteine 1123, cysteine 1129–cysteine 1141, cysteine 1136–cysteine 1150, cysteine 1152–cysteine 1164, cysteine 1170–cysteine 1182, cysteine 1176–cysteine 1191, cysteine 1193–cysteine 1206, cysteine 1212–cysteine 1223, cysteine 1218–cysteine 1232, cysteine 1234–cysteine 1247, cysteine 1253–cysteine 1265, cysteine 1259–cysteine 1274, cysteine 1276–cysteine 1289, cysteine 1295–cysteine 1307, cysteine 1302–cysteine 1316, cysteine 1318–cysteine 1332, cysteine 1359–cysteine 1382, cysteine 1369–cysteine 1394, cysteine 1383–cysteine 1397, cysteine 1435–cysteine 1448, cysteine 1443–cysteine 1457, cysteine 1459–cysteine 1472, cysteine 1478–cysteine 1488, cysteine 1483–cysteine 1497, and cysteine 1499–cysteine 1512. The EGF-like 5; calcium-binding domain occupies 877-919; it reads DDNECLRNPCEGRGRCVNSVGSYSCLCYPGYTLATLGDTQECQ. The EGF-like 6; calcium-binding domain occupies 920 to 959; that stretch reads DVDECEQPGVCSGGRCSNTEGSYHCECDQGYVMVRRGHCQ. An EGF-like 7; calcium-binding domain is found at 960–999; it reads DINECRHPGTCPDGRCVNSPGSYTCLACEEGYIGQSGNCV. Positions 1000–1040 constitute an EGF-like 8; calcium-binding domain; that stretch reads DMNECLTPGICAHGRCINMEGSFRCSCEPGYELTPDKKGCR. The EGF-like 9; calcium-binding domain maps to 1041 to 1082; sequence DVDECASRASCPTGLCLNTEGSFTCSACQSGYWVNEDGTACE. Residues 1083-1124 enclose the EGF-like 10; calcium-binding domain; the sequence is DLDECAFPGVCPTGVCTNTVGSFSCKDCDRGFRPSPLGNSCE. Residues 1125–1165 form the EGF-like 11; calcium-binding domain; it reads DVDECEGPQNSCLGGECKNTDGSYQCLCPQGFQLANGTVCE. Asparagine 1160 carries an N-linked (GlcNAc...) asparagine glycan. An EGF-like 12; calcium-binding domain is found at 1166-1207; that stretch reads DVDECVGEEHCAPHGECLNSPGSFFCLCAPGFASAEGGTRCQ. The 41-residue stretch at 1208–1248 folds into the EGF-like 13; calcium-binding domain; the sequence is DVDECATTEPCLGGHCVNTEGSFNCLCETGFQPAPDSGECV. Residues 1249-1290 enclose the EGF-like 15; calcium-binding domain; sequence DIDECANDTVCGNHGFCDNTDGSFRCLCDQGFETSPSGWECV. Asparagine 1255 is a glycosylation site (N-linked (GlcNAc...) asparagine). In terms of domain architecture, EGF-like 16; calcium-binding spans 1291–1333; that stretch reads DVNECELMLAVCGDALCENVEGSFLCLCASDLEEYDAEEGHCR. The TB 3 domain maps to 1357 to 1409; sequence MECYAEHNGGPPCSQILGQNSTQAECCSTQGARWGETCDPCPSEDSVEFSELC. Asparagine 1376 carries an N-linked (GlcNAc...) asparagine glycan. One can recognise an EGF-like 17; calcium-binding domain in the interval 1431–1473; sequence DADECILFGPALCQNGRCLNTVPGYICLCNPGYHYDAVSRKCQ. Residues 1474-1513 enclose the EGF-like 18; calcium-binding domain; that stretch reads DHNECQDLACENGECVNTEGSFHCFCSPPLILDLSGQRCV. A glycan (N-linked (GlcNAc...) asparagine) is linked at asparagine 1514. In terms of domain architecture, TB 4 spans 1530–1582; sequence DICWKKVTNDVCSQPLRGHHTTYTECCCQDGEAWSQQCALCPPRSSEVYAQLC. 10 disulfides stabilise this stretch: cysteine 1532/cysteine 1555, cysteine 1541/cysteine 1567, cysteine 1556/cysteine 1570, cysteine 1557/cysteine 1582, cysteine 1680/cysteine 1691, cysteine 1686/cysteine 1700, cysteine 1702/cysteine 1715, cysteine 1721/cysteine 1736, cysteine 1731/cysteine 1745, and cysteine 1747/cysteine 1760. The segment at 1585 to 1764 is C-terminal domain; sequence ARIEAEREAG…PGPPHCAAKE (180 aa). An EGF-like 19; calcium-binding domain is found at 1676 to 1716; that stretch reads QAEECGILNGCENGRCVRVREGYTCDCFEGFQLDTALMACV. Residues 1717-1761 enclose the EGF-like 20; calcium-binding domain; it reads DVNECEDLNGAARLCAHGHCENTEGSYRCHCSPGYVAEPGPPHCA.

This sequence belongs to the LTBP family. In terms of assembly, forms part of the large latent transforming growth factor beta precursor complex; removal is essential for activation of complex. Interacts with SDC4. Interacts (via C-terminal domain) with FBN1 (via N-terminal domain) in a Ca(+2)-dependent manner. In terms of processing, N-Glycosylated. Post-translationally, contains hydroxylated asparagine residues. In terms of tissue distribution, expressed in cortical astrocytes and glioma cells. Expression is up-regulated by TGFB1.

The protein localises to the secreted. It is found in the extracellular space. The protein resides in the extracellular matrix. Functionally, may play an integral structural role in elastic-fiber architectural organization and/or assembly. This chain is Latent-transforming growth factor beta-binding protein 2 (Ltbp2), found in Rattus norvegicus (Rat).